Reading from the N-terminus, the 424-residue chain is Arginine biosynthesis bifunctional protein ArgJ (424 aa).

Positions 166, 192, 203, 290, 419, and 424 each coordinate substrate. Catalysis depends on T203, which acts as the Nucleophile.

Belongs to the ArgJ family. As to quaternary structure, heterotetramer of two alpha and two beta chains.

Its subcellular location is the cytoplasm. It carries out the reaction N(2)-acetyl-L-ornithine + L-glutamate = N-acetyl-L-glutamate + L-ornithine. The enzyme catalyses L-glutamate + acetyl-CoA = N-acetyl-L-glutamate + CoA + H(+). It functions in the pathway amino-acid biosynthesis; L-arginine biosynthesis; L-ornithine and N-acetyl-L-glutamate from L-glutamate and N(2)-acetyl-L-ornithine (cyclic): step 1/1. Its pathway is amino-acid biosynthesis; L-arginine biosynthesis; N(2)-acetyl-L-ornithine from L-glutamate: step 1/4. Catalyzes two activities which are involved in the cyclic version of arginine biosynthesis: the synthesis of N-acetylglutamate from glutamate and acetyl-CoA as the acetyl donor, and of ornithine by transacetylation between N(2)-acetylornithine and glutamate. The polypeptide is Arginine biosynthesis bifunctional protein ArgJ (Colwellia psychrerythraea (strain 34H / ATCC BAA-681) (Vibrio psychroerythus)).